A 457-amino-acid polypeptide reads, in one-letter code: 11S globulin seed storage protein Ana o 2.0101 (457 aa).

The N-terminal stretch at 1–14 (LSVCFLILFHGCLA) is a signal peptide. Residues 15-29 (SRQEWQQQDECQIDR) form an igE-binding region. Cystine bridges form between C25–C58 and C101–C278. Conformational epitope; mouse monoclonal antibody (mAb) 2B5-binding stretches follow at residues 29 to 37 (RLDALEPDN) and 31 to 48 (DALEPDNRVEYEAGTVEA). Residues 30-220 (LDALEPDNRV…AFQVDERLIK (191 aa)) enclose the Cupin type-1 1 domain. Binds goat polyclonal antibodies (pAbs) regions lie at residues 32–45 (ALEPDNRVEYEAGT) and 55–86 (QFRCAGVALVRHTIQPNGLLLPQYSNAPQLIY). A mouse monoclonal antibody (mAb) 2B5-binding region spans residues 34-57 (EPDNRVEYEAGTVEAWDPNHEQFR). The segment at 41–55 (YEAGTVEAWDPNHEQ) is mouse monoclonal antibody (mAb) 4H9-binding. Residues 105 to 119 (YQAPQQGRQQGQSGR) form an igE-binding region. A binds goat polyclonal antibodies (pAbs) region spans residues 215 to 239 (DERLIKQLKSEDNRGGIVKVKDDEL). Positions 233–252 (KVKDDELRVIRPSRSQSERG) are CD4(+) T cell-reactive epitope. Residues 243 to 270 (RPSRSQSERGSESEEESEDEKRRWGQRD) are disordered. Over residues 261 to 270 (DEKRRWGQRD) the composition is skewed to basic and acidic residues. The segment at 265–289 (RWGQRDNGIEETICTMRLKENINDP) is linear epitope; mouse monoclonal antibody (mAb) 1F5-binding. An NGXEET; peptidase recognition motif motif is present at residues 271-276 (NGIEET). A Cupin type-1 2 domain is found at 284–433 (ENINDPARAD…AFQISREDAR (150 aa)). CD4(+) T cell-reactive epitope stretches follow at residues 289–308 (PARADIYTPEVGRLTTLNSL), 297–316 (PEVGRLTTLNSLNLPILKWL), 321–340 (EKGVLYKNALVLPHWNLNSH), 329–348 (ALVLPHWNLNSHSIIYGCKG), and 377–396 (QNFAVVKRAREERFEWISFK). The tract at residues 395–416 (FKTNDRAMTSPLAGRTSVLGGM) is binds goat polyclonal antibodies (pAbs), but buried in the 3D-structure model.

The protein belongs to the 11S seed storage protein (globulins) family. As to quaternary structure, homotrimer. Hexamer. Each subunit is composed of an acidic and a basic chain derived from a single precursor and linked by a disulfide bond. Proteolytically processed from a single precursor to produce an acidic and a basic chain that are linked by a disulfide bond. Not glycosylated. Expressed in seed (at protein level). Expressed in the juice of the cashew apple (at protein level).

Functionally, seed storage protein. In Anacardium occidentale (Cashew), this protein is 11S globulin seed storage protein Ana o 2.0101.